Here is an 862-residue protein sequence, read N- to C-terminus: Probable alpha,alpha-trehalose-phosphate synthase [UDP-forming] 11 (862 aa).

Ser5 is subject to Phosphoserine. The tract at residues Pro50–Arg538 is glycosyltransferase. Residues Ser838–Ala862 are disordered.

In the N-terminal section; belongs to the glycosyltransferase 20 family. The protein in the C-terminal section; belongs to the trehalose phosphatase family. Expressed in leaves, roots, stems and flowers.

It carries out the reaction D-glucose 6-phosphate + UDP-alpha-D-glucose = alpha,alpha-trehalose 6-phosphate + UDP + H(+). The sequence is that of Probable alpha,alpha-trehalose-phosphate synthase [UDP-forming] 11 (TPS11) from Arabidopsis thaliana (Mouse-ear cress).